The following is an 809-amino-acid chain: F-BAR domain only protein 2 (809 aa).

An F-BAR domain is found at 3–250 (MAHFVENFWG…NMANTTIESL (248 aa)). The mediates dimerization and binding to membranes enriched in Pi(4,5)-P2 and induces their tubulation stretch occupies residues 3–274 (MAHFVENFWG…PGLIEFEECD (272 aa)). A coiled-coil region spans residues 87-156 (HLDLVRKLQE…CVEQERLKKE (70 aa)). A Glycyl lysine isopeptide (Lys-Gly) (interchain with G-Cter in SUMO2) cross-link involves residue K297. Positions 301–352 (DAESVECPDADSLNIPDVDEEGFSIKPEANQNDTKENHFYSSSDSDSEDEEP) are disordered. S312 bears the Phosphoserine mark. Residue T385 is modified to Phosphothreonine. Phosphoserine is present on residues S387, S394, S402, and S403. The segment covering 390–416 (VSRHSPVQMNRNSSNEELTKSKPSSLP) has biased composition (polar residues). Disordered regions lie at residues 390-422 (VSRH…KGTN) and 435-536 (LESS…PVSL). A compositionally biased stretch (low complexity) spans 435 to 456 (LESSSAPLTSSSSARPTTPLSL). Phosphoserine is present on residues S487, S492, S495, S507, S509, S510, and S532. Over residues 501–520 (PLARAESSSSISSSASLSAA) the composition is skewed to low complexity. The segment at 520 to 809 (ANTPTVGVSR…FATGRYLADC (290 aa)) is mediates interaction with DAB2, EPS15, EPS15R and ITSN1. The MHD domain maps to 541-808 (TLPVAIALTE…RFATGRYLAD (268 aa)).

The protein belongs to the FCHO family. Homodimer; disulfide-linked. May form homotetramer. Interacts with AP2A1. Interacts with EPS15, EPS15R, ITSN1 and ITSN2; recruit those scaffolding proteins which in turn may interact with the adaptor protein complex AP-2 at the plasma membrane. Interacts with DAB2 (via DPF motifs); mediates LDL receptor/LDLR endocytosis. Post-translationally, ubiquitinated. Mainly undergoes monoubiquitination but also polyubiquitination. Ubiquitously expressed (at protein level).

It localises to the membrane. Its subcellular location is the clathrin-coated pit. Functionally, functions in an early step of clathrin-mediated endocytosis. Has both a membrane binding/bending activity and the ability to recruit proteins essential to the formation of functional clathrin-coated pits. Has a lipid-binding activity with a preference for membranes enriched in phosphatidylserine and phosphoinositides (Pi(4,5) biphosphate) like the plasma membrane. Its membrane-bending activity might be important for the subsequent action of clathrin and adaptors in the formation of clathrin-coated vesicles. Involved in adaptor protein complex AP-2-dependent endocytosis of the transferrin receptor, it also functions in the AP-2-independent endocytosis of the LDL receptor. This Mus musculus (Mouse) protein is F-BAR domain only protein 2 (Fcho2).